Here is a 141-residue protein sequence, read N- to C-terminus: Large ribosomal subunit protein uL11 (141 aa).

It belongs to the universal ribosomal protein uL11 family. In terms of assembly, part of the ribosomal stalk of the 50S ribosomal subunit. Interacts with L10 and the large rRNA to form the base of the stalk. L10 forms an elongated spine to which L12 dimers bind in a sequential fashion forming a multimeric L10(L12)X complex. Post-translationally, one or more lysine residues are methylated.

Its function is as follows. Forms part of the ribosomal stalk which helps the ribosome interact with GTP-bound translation factors. The protein is Large ribosomal subunit protein uL11 of Gloeobacter violaceus (strain ATCC 29082 / PCC 7421).